The following is an 865-amino-acid chain: Leucine--tRNA ligase (865 aa).

The 'HIGH' region signature appears at 44 to 54; it reads PYPSGRIHVGH. The 'KMSKS' region motif lies at 625-629; that stretch reads KMSKS. An ATP-binding site is contributed by lysine 628.

It belongs to the class-I aminoacyl-tRNA synthetase family.

Its subcellular location is the cytoplasm. The catalysed reaction is tRNA(Leu) + L-leucine + ATP = L-leucyl-tRNA(Leu) + AMP + diphosphate. The protein is Leucine--tRNA ligase of Maricaulis maris (strain MCS10) (Caulobacter maris).